The sequence spans 391 residues: Transaldolase (391 aa).

The segment at 1–329 is transaldolase; the sequence is MGKNLLEQLR…RLKVLDGQEH (329 aa). The active-site Schiff-base intermediate with substrate is Lys136. EF-hand domains are found at residues 329-364 and 365-387; these read HIKH…FDAL and DRDH…AFRL. Residues Asp342, Asp344, Asp346, Glu353, Asp365, Asp367, Asp369, Lys371, and Glu376 each contribute to the Ca(2+) site.

It belongs to the transaldolase family. Type 1 subfamily.

It localises to the cytoplasm. The catalysed reaction is D-sedoheptulose 7-phosphate + D-glyceraldehyde 3-phosphate = D-erythrose 4-phosphate + beta-D-fructose 6-phosphate. It participates in carbohydrate degradation; pentose phosphate pathway; D-glyceraldehyde 3-phosphate and beta-D-fructose 6-phosphate from D-ribose 5-phosphate and D-xylulose 5-phosphate (non-oxidative stage): step 2/3. Functionally, transaldolase is important for the balance of metabolites in the pentose-phosphate pathway. This Synechocystis sp. (strain ATCC 27184 / PCC 6803 / Kazusa) protein is Transaldolase.